The following is a 274-amino-acid chain: Lipid phosphate phosphatase 1 (274 aa).

Over 1 to 15 the chain is Lumenal; it reads MISVMADEKHKEYFK. Residues 16–33 traverse the membrane as a helical segment; sequence LYYFQYMIIGLCTILFLY. At 34–69 the chain is on the cytoplasmic side; sequence SEISLVPRGQNIEFSLDDPSISKRYVPNELVGPLEC. Residues 70-87 traverse the membrane as a helical segment; the sequence is LILSVGLSNMVVFWTCMF. At 88 to 117 the chain is on the lumenal side; the sequence is DKDLLKKNRVKRLRERPDGISNDFHFMHTS. The helical transmembrane segment at 118–139 threads the bilayer; sequence ILCLMLIISINAALTGALKLII. Residues 136 to 144 are phosphatase sequence motif I; sequence KLIIGNLRP. The Cytoplasmic portion of the chain corresponds to 140 to 189; the sequence is GNLRPDFVDRCIPDLQKMSDSDSLVFGLDICKQTNKWILYEGLKSTPSGH. The phosphatase sequence motif II stretch occupies residues 186 to 189; that stretch reads PSGH. A helical transmembrane segment spans residues 190–203; sequence SSFIVSTMGFTYLW. Topologically, residues 204–214 are lumenal; that stretch reads QRVFTTRNTRS. Residues 215–231 form a helical membrane-spanning segment; the sequence is CIWCPLLALVVMVSRVI. A phosphatase sequence motif III region spans residues 228 to 239; that stretch reads SRVIDHRHHWYD. The Cytoplasmic segment spans residues 232–237; sequence DHRHHW. Residues 238 to 255 traverse the membrane as a helical segment; it reads YDVVSGAVLAFLVIYCCW. Residues 256 to 274 are Lumenal-facing; that stretch reads KWTFTNLAKRDILPSPVSV.

Belongs to the PA-phosphatase related phosphoesterase family.

The protein resides in the golgi apparatus membrane. It catalyses the reaction a 1,2-diacyl-sn-glycerol 3-diphosphate + H2O = a 1,2-diacyl-sn-glycero-3-phosphate + phosphate + H(+). The enzyme catalyses a 1,2-diacyl-sn-glycero-3-phosphate + H2O = a 1,2-diacyl-sn-glycerol + phosphate. It carries out the reaction a 1-acyl-sn-glycero-3-phosphate + H2O = a 1-acyl-sn-glycerol + phosphate. PA phosphatase activity is magnesium ion-independent and potently inhibited by N-ethylmaleimide. Also inhibited by phenylglyoxal and propranolol. In terms of biological role, catalyzes the dephosphorylation of diacylglycerol diphosphate (DGPP) to phosphatidate (PA) and the subsequent dephosphorylation of PA to diacylglycerol (DAG). Together with DPP1, regulates intracellular DGPP and PA levels which are phospholipid molecules believed to play a signaling role in stress response. Can also use lysophosphatidic acid (LPA) as a substrate. Substrate preference is PA &gt; DGPP &gt; LPA. The protein is Lipid phosphate phosphatase 1 (LPP1) of Saccharomyces cerevisiae (strain ATCC 204508 / S288c) (Baker's yeast).